The sequence spans 196 residues: Type-4 uracil-DNA glycosylase (196 aa).

2 residues coordinate [4Fe-4S] cluster: Cys-13 and Cys-16. Uracil is bound by residues 40–42, Phe-54, and Asn-80; that span reads GEA. 2 residues coordinate [4Fe-4S] cluster: Cys-84 and Cys-100. His-162 is a uracil binding site.

Belongs to the uracil-DNA glycosylase (UDG) superfamily. Type 4 (UDGa) family.

The enzyme catalyses Hydrolyzes single-stranded DNA or mismatched double-stranded DNA and polynucleotides, releasing free uracil.. In terms of biological role, removes uracil bases that are present in DNA as a result of either deamination of cytosine or misincorporation of dUMP instead of dTMP. Can remove uracil from double-stranded DNA containing either a U/G or U/A base pair as well as from single-stranded DNA. In Pyrobaculum aerophilum (strain ATCC 51768 / DSM 7523 / JCM 9630 / CIP 104966 / NBRC 100827 / IM2), this protein is Type-4 uracil-DNA glycosylase.